The primary structure comprises 142 residues: Large-conductance mechanosensitive channel (142 aa).

The next 3 helical transmembrane spans lie at 14-34 (VMDL…VDSV), 38-58 (LVMP…NYFL), and 82-102 (GNFI…FLLI).

This sequence belongs to the MscL family. In terms of assembly, homopentamer.

It localises to the cell inner membrane. Channel that opens in response to stretch forces in the membrane lipid bilayer. May participate in the regulation of osmotic pressure changes within the cell. This Rhizobium meliloti (strain 1021) (Ensifer meliloti) protein is Large-conductance mechanosensitive channel.